We begin with the raw amino-acid sequence, 1072 residues long: Serine/threonine-protein kinase 11-interacting protein (1072 aa).

8 LRR repeats span residues 109–130, 132–152, 164–185, 187–209, 210–231, 233–254, 255–276, and 280–301; these read SLRQLELRGVPIHSLCGLRGIY, QLESLVCNRSIQALEELLSAC, ALLSADFSYNALRSLDSSLRLL, ALRFLNLSHNHLQDCKGFLMDLC, ELYHLDISYNHLRLVPRVGPSG, ALGTLILRANELRSLQGLEQLK, NLRHLDVAYNLLEGHTELAPLW, and ELRKLYLEGNPLWFHPAHRAAT. A disordered region spans residues 333 to 366; that stretch reads DSSGLGPVIQPLSWPVGSTTETSGGPELSDSLSS. Residues Ser-388, Ser-390, and Ser-393 each carry the phosphoserine modification. The span at 441 to 454 shows a compositional bias: polar residues; the sequence is MGSSPLSTTKTPAL. Disordered regions lie at residues 441 to 522 and 741 to 762; these read MGSS…EQKA and RPDGIPPQTSISHDRSSWSLSP. 2 stretches are compositionally biased toward basic and acidic residues: residues 478–492 and 501–510; these read KESPEKVSEEGRVEP and EQDKEEGSRE. Ser-757, Ser-761, and Ser-763 each carry phosphoserine. Residues 967–993 form a disordered region; the sequence is HAESPLPVVSDETSEQPASLGPGPSLQ.

The protein belongs to the STK11IP family. Found in a ternary complex composed of STK11/LKB1, STK11IP and SMAD4. Interacts with SMAD4. Interacts with STK11/LKB1.

Its subcellular location is the cytoplasm. In terms of biological role, may regulate STK11/LKB1 function by controlling its subcellular localization. The polypeptide is Serine/threonine-protein kinase 11-interacting protein (Stk11ip) (Mus musculus (Mouse)).